Here is a 186-residue protein sequence, read N- to C-terminus: Ribosome-recycling factor (186 aa).

Belongs to the RRF family.

It localises to the cytoplasm. Its function is as follows. Responsible for the release of ribosomes from messenger RNA at the termination of protein biosynthesis. May increase the efficiency of translation by recycling ribosomes from one round of translation to another. This is Ribosome-recycling factor from Bordetella parapertussis (strain 12822 / ATCC BAA-587 / NCTC 13253).